The chain runs to 70 residues: Large ribosomal subunit protein bL31 (70 aa).

4 residues coordinate Zn(2+): C17, C19, C37, and C40.

This sequence belongs to the bacterial ribosomal protein bL31 family. Type A subfamily. In terms of assembly, part of the 50S ribosomal subunit. Zn(2+) is required as a cofactor.

Functionally, binds the 23S rRNA. This is Large ribosomal subunit protein bL31 from Clostridium kluyveri (strain NBRC 12016).